We begin with the raw amino-acid sequence, 303 residues long: Cysteine synthase B (303 aa).

N6-(pyridoxal phosphate)lysine is present on K41. Residues N71, G174–T178, and S255 contribute to the pyridoxal 5'-phosphate site.

The protein belongs to the cysteine synthase/cystathionine beta-synthase family. Pyridoxal 5'-phosphate is required as a cofactor.

The catalysed reaction is O-acetyl-L-serine + hydrogen sulfide = L-cysteine + acetate. It participates in amino-acid biosynthesis; L-cysteine biosynthesis; L-cysteine from L-serine: step 2/2. In terms of biological role, two cysteine synthase enzymes are found. Both catalyze the same reaction. Cysteine synthase B can also use thiosulfate in place of sulfide to give cysteine thiosulfonate as a product. The protein is Cysteine synthase B (cysM) of Salmonella typhimurium (strain LT2 / SGSC1412 / ATCC 700720).